The following is an 86-amino-acid chain: Large ribosomal subunit protein eL43 (86 aa).

The C4-type zinc finger occupies C38–C59.

The protein belongs to the eukaryotic ribosomal protein eL43 family. The cofactor is Zn(2+).

In Thermococcus gammatolerans (strain DSM 15229 / JCM 11827 / EJ3), this protein is Large ribosomal subunit protein eL43.